The sequence spans 565 residues: Perivitellin-2 67 kDa subunit (565 aa).

An N-terminal signal peptide occupies residues 1–26 (MSQLRWWVVSQVLLLIAICSLDHSEG). The MACPF domain maps to 27–340 (ARVCPKIVPG…AKVANLDRLT (314 aa)). The tract at residues 387 to 565 (VPAWFSDRTT…CGMSWALIAK (179 aa)) is invertebrate MACPF Accessory Domain (IMAD).

As to quaternary structure, perivitellin-2 is a dimer of heterodimers held together head-to-tail by non-covalent forces. The heterodimer is composed of the tachylectin subunit (31 kDa) and the MACPF subunit (67 kDa) that are disulfide-linked. PV2 is a very high density lipoprotein (VHDL). It contains 3.75% of lipids. The major lipid classes are free sterols and phospholipids and also have significant quantities of energy-providing triacylglycerides and free fatty acids. Produced by albumen secretory cells. Found in developing eggs.

It is found in the secreted. It localises to the target cell membrane. Its function is as follows. The egg defensive protein perivitellin-2 is a pore-forming two-subunit glycoprotein that affects both the nervous and digestive systems of mammals. In addition, it is a source of both structural and energetic molecules during embryonic development. The tachylectin subunit (31 kDa) binds target membranes while the MACPF subunit (67 kDa) disrupts lipid bilayers forming large pores (inner diameter of about 5.6 nm) altering the plasma membrance conductance. Both in vivo and in vitro, the protein shows wide pH range stability and is resistant to enzymatic proteolysis from gastrointestinal environments. It is cytotoxic to both epithelial and immune cells from the digestive system of mammals. It induces enterocyte death by a lytic mechanism and disrupts enterocyte monolayers in a dose-dependent manner. After oral administration to mice, it binds enterocytes and induces large dose-dependent morphological changes on their small intestine mucosa, reducing the absorptive surface. Additionally, it is detected in the Peyer's patches where it activates lymphoid follicles and triggers apoptosis. The toxin can also traverse the intestinal barrier and induce oral adaptive immunity with evidence of circulating antibody response. The toxin also shows hemagglutination properties thanks to the tachylectin subunit, but has no hemolytic activity. In addition to enterotoxin activity, the toxin also acts as a neurotoxin, since an intraperitoneal injection can induce paralysis of the mice rear limbs, followed by death. In Pomacea maculata (Giant applesnail), this protein is Perivitellin-2 67 kDa subunit.